Consider the following 309-residue polypeptide: Sporulation sigma-E factor-processing peptidase (309 aa).

Helical transmembrane passes span 7–27 (VIWLLNFCFDALLLLLTAFIL), 36–55 (LVGGAFIGSSIVLLMFTPFS), 61–78 (PAGKLAFSVVIVVVTFGF), 88–105 (LFSFYFATFLMGGGIIGA), and 130–147 (PISWLFIVGGFPALWFFS). Residue Asp-183 is part of the active site.

The protein belongs to the peptidase U4 family. In terms of assembly, self-associates. Interacts with SigE. Interacts with SpoIIR.

The protein localises to the cell membrane. Its function is as follows. Probable aspartic protease that is responsible for the proteolytic cleavage of the RNA polymerase sigma E factor (SigE/spoIIGB) to yield the active peptide in the mother cell during sporulation. Responds to a signal from the forespore that is triggered by the extracellular signal protein SpoIIR. In Bacillus subtilis (strain 168), this protein is Sporulation sigma-E factor-processing peptidase (spoIIGA).